Here is a 115-residue protein sequence, read N- to C-terminus: Large ribosomal subunit protein uL22 (115 aa).

It belongs to the universal ribosomal protein uL22 family. As to quaternary structure, part of the 50S ribosomal subunit.

Its function is as follows. This protein binds specifically to 23S rRNA; its binding is stimulated by other ribosomal proteins, e.g. L4, L17, and L20. It is important during the early stages of 50S assembly. It makes multiple contacts with different domains of the 23S rRNA in the assembled 50S subunit and ribosome. The globular domain of the protein is located near the polypeptide exit tunnel on the outside of the subunit, while an extended beta-hairpin is found that lines the wall of the exit tunnel in the center of the 70S ribosome. The sequence is that of Large ribosomal subunit protein uL22 from Streptomyces avermitilis (strain ATCC 31267 / DSM 46492 / JCM 5070 / NBRC 14893 / NCIMB 12804 / NRRL 8165 / MA-4680).